The chain runs to 37 residues: Large ribosomal subunit protein bL36A (37 aa).

Belongs to the bacterial ribosomal protein bL36 family.

In Actinobacillus pleuropneumoniae serotype 3 (strain JL03), this protein is Large ribosomal subunit protein bL36A.